A 335-amino-acid polypeptide reads, in one-letter code: UPF0065 protein BB4329 (335 aa).

A signal peptide spans 1–39; the sequence is MNKNIPAFHRRCHGLVQGLARTLLLAPVLLALSVPAAQA.

Belongs to the UPF0065 (bug) family.

Its subcellular location is the periplasm. This chain is UPF0065 protein BB4329, found in Bordetella bronchiseptica (strain ATCC BAA-588 / NCTC 13252 / RB50) (Alcaligenes bronchisepticus).